A 463-amino-acid polypeptide reads, in one-letter code: Glycine--tRNA ligase (463 aa).

Residues Arg98 and Glu174 each contribute to the substrate site. Residues 206–208 (RNE), 216–221 (FRTREF), 290–291 (EL), and 334–337 (GADR) contribute to the ATP site. 221–225 (FEQME) contributes to the substrate binding site. 330–334 (EPSLG) is a substrate binding site.

Belongs to the class-II aminoacyl-tRNA synthetase family. In terms of assembly, homodimer.

It localises to the cytoplasm. It catalyses the reaction tRNA(Gly) + glycine + ATP = glycyl-tRNA(Gly) + AMP + diphosphate. Functionally, catalyzes the attachment of glycine to tRNA(Gly). In Staphylococcus aureus (strain Mu50 / ATCC 700699), this protein is Glycine--tRNA ligase.